Here is a 418-residue protein sequence, read N- to C-terminus: Diacylglycerol O-acyltransferase 1 (418 aa).

A disordered region spans residues 1 to 30 (MSGTFNDIRRRKKEEGSPTAGITERHENKS). At 1–71 (MSGTFNDIRR…LAVAWHTSSF (71 aa)) the chain is on the cytoplasmic side. Position 17 is a phosphoserine (Ser17). The helical transmembrane segment at 72 to 92 (VLFSIFTLFAISTPALWVLAI) threads the bilayer. Topologically, residues 93-186 (PYMIYFFFDR…DYRNQECTGP (94 aa)) are lumenal. Asn173 carries N-linked (GlcNAc...) asparagine glycosylation. A helical transmembrane segment spans residues 187-207 (TYLFGYHPHGIGALGAFGAFA). Residues 208 to 215 (TEGCNYSK) are Cytoplasmic-facing. A helical transmembrane segment spans residues 216–236 (IFPGIPISLMTLVTQFHIPLY). The Lumenal portion of the chain corresponds to 237 to 289 (RDYLLALGISSVSRKNALRTLSKNQSICIVVGGARESLLSSTNGTQLILNKRK). Asn260 and Asn279 each carry an N-linked (GlcNAc...) asparagine glycan. A helical transmembrane segment spans residues 290 to 310 (GFIKLAIQTGNINLVPVFAFG). The Cytoplasmic segment spans residues 311–418 (EVDCYNVLST…VPDAELKIVG (108 aa)).

Belongs to the diacylglycerol acyltransferase family.

Its subcellular location is the lipid droplet. The protein resides in the endoplasmic reticulum membrane. It carries out the reaction an acyl-CoA + a 1,2-diacyl-sn-glycerol = a triacyl-sn-glycerol + CoA. The catalysed reaction is a 2-acylglycerol + an acyl-CoA = a 1,2-diacylglycerol + CoA. The enzyme catalyses 2-(9Z-octadecenoyl)-glycerol + (9Z)-octadecenoyl-CoA = 1,2-di-(9Z-octadecenoyl)-glycerol + CoA. It functions in the pathway glycerolipid metabolism; triacylglycerol biosynthesis. Functionally, catalyzes the terminal and only committed step in triacylglycerol (TAG) synthesis by using diacylglycerol (DAG) and fatty acyl-CoA as substrates. Required for storage lipid synthesis. Major DAG esterifying enzyme in stationary phase when TAG production is particularly active. Involved in lipid particle synthesis from the endoplasmic reticulum, promoting localized TAG production at discrete ER subdomains, and in ergosterol biosynthesis. Also has monoacylglycerol acyltransferase (MGAT) activity, catalyzing the acyl-CoA-dependent esterification of monoacylglycerol to diacylglycerol. Can also utilize ceramide instead of DAG, acylating the ceramides by attaching a fatty acid to the hydroxy group on the first carbon atom of the long-chain base to produce 1-O-acylceramides. The sequence is that of Diacylglycerol O-acyltransferase 1 (DGA1) from Saccharomyces cerevisiae (strain ATCC 204508 / S288c) (Baker's yeast).